The sequence spans 211 residues: Heat shock 70 kDa protein 4L (211 aa).

S161 is subject to Phosphoserine.

Belongs to the heat shock protein 70 family. As to quaternary structure, homodimer.

The protein localises to the cytoplasm. The protein resides in the nucleus. Possesses chaperone activity in vitro where it inhibits aggregation of citrate synthase. The chain is Heat shock 70 kDa protein 4L from Mesocricetus auratus (Golden hamster).